We begin with the raw amino-acid sequence, 580 residues long: V-type proton ATPase catalytic subunit A (580 aa).

209–216 (GAFGCGKT) is a binding site for ATP.

This sequence belongs to the ATPase alpha/beta chains family. V-ATPase is a heteromultimeric enzyme composed of a peripheral catalytic V1 complex (main components: subunits A, B, C, D, E, and F) attached to an integral membrane V0 proton pore complex (main component: the proteolipid protein).

The enzyme catalyses ATP + H2O + 4 H(+)(in) = ADP + phosphate + 5 H(+)(out). In terms of biological role, catalytic subunit of the peripheral V1 complex of vacuolar ATPase. V-ATPase vacuolar ATPase is responsible for acidifying a variety of intracellular compartments in eukaryotic cells. The sequence is that of V-type proton ATPase catalytic subunit A from Hordeum vulgare (Barley).